Reading from the N-terminus, the 629-residue chain is Arginine--tRNA ligase (629 aa).

The 'HIGH' region motif lies at 128–138 (VNPTKPLHMGH).

It belongs to the class-I aminoacyl-tRNA synthetase family.

The protein localises to the cytoplasm. The enzyme catalyses tRNA(Arg) + L-arginine + ATP = L-arginyl-tRNA(Arg) + AMP + diphosphate. The chain is Arginine--tRNA ligase from Pyrococcus furiosus (strain ATCC 43587 / DSM 3638 / JCM 8422 / Vc1).